The following is a 144-amino-acid chain: Nucleoside diphosphate kinase (144 aa).

Residues Lys-11, Phe-59, Arg-87, Thr-93, Arg-104, and Asn-114 each contribute to the ATP site. Catalysis depends on His-117, which acts as the Pros-phosphohistidine intermediate.

This sequence belongs to the NDK family. In terms of assembly, homotetramer. It depends on Mg(2+) as a cofactor.

It is found in the cytoplasm. It carries out the reaction a 2'-deoxyribonucleoside 5'-diphosphate + ATP = a 2'-deoxyribonucleoside 5'-triphosphate + ADP. It catalyses the reaction a ribonucleoside 5'-diphosphate + ATP = a ribonucleoside 5'-triphosphate + ADP. Functionally, major role in the synthesis of nucleoside triphosphates other than ATP. The ATP gamma phosphate is transferred to the NDP beta phosphate via a ping-pong mechanism, using a phosphorylated active-site intermediate. In Coxiella burnetii (strain CbuG_Q212) (Coxiella burnetii (strain Q212)), this protein is Nucleoside diphosphate kinase.